We begin with the raw amino-acid sequence, 382 residues long: Dual-specificity RNA methyltransferase RlmN (382 aa).

Glu-96 serves as the catalytic Proton acceptor. In terms of domain architecture, Radical SAM core spans 102–342 (QGKRGTLCVS…VRTTRGEDID (241 aa)). The cysteines at positions 109 and 345 are disulfide-linked. [4Fe-4S] cluster-binding residues include Cys-116, Cys-120, and Cys-123. S-adenosyl-L-methionine-binding positions include 170–171 (GE), Ser-202, 224–226 (SLH), and Asn-302. Cys-345 (S-methylcysteine intermediate) is an active-site residue.

Belongs to the radical SAM superfamily. RlmN family. The cofactor is [4Fe-4S] cluster.

It localises to the cytoplasm. It catalyses the reaction adenosine(2503) in 23S rRNA + 2 reduced [2Fe-2S]-[ferredoxin] + 2 S-adenosyl-L-methionine = 2-methyladenosine(2503) in 23S rRNA + 5'-deoxyadenosine + L-methionine + 2 oxidized [2Fe-2S]-[ferredoxin] + S-adenosyl-L-homocysteine. It carries out the reaction adenosine(37) in tRNA + 2 reduced [2Fe-2S]-[ferredoxin] + 2 S-adenosyl-L-methionine = 2-methyladenosine(37) in tRNA + 5'-deoxyadenosine + L-methionine + 2 oxidized [2Fe-2S]-[ferredoxin] + S-adenosyl-L-homocysteine. Functionally, specifically methylates position 2 of adenine 2503 in 23S rRNA and position 2 of adenine 37 in tRNAs. m2A2503 modification seems to play a crucial role in the proofreading step occurring at the peptidyl transferase center and thus would serve to optimize ribosomal fidelity. In Pseudomonas fluorescens (strain Pf0-1), this protein is Dual-specificity RNA methyltransferase RlmN.